We begin with the raw amino-acid sequence, 357 residues long: Eugenol O-methyltransferase (357 aa).

Residues glycine 203, aspartate 226, aspartate 246, methionine 247, and lysine 260 each coordinate S-adenosyl-L-methionine. Histidine 264 acts as the Proton acceptor in catalysis.

It belongs to the class I-like SAM-binding methyltransferase superfamily. Cation-independent O-methyltransferase family. COMT subfamily. Specifically expressed in the peltate glandular trichomes on the surface of the young basil leaves.

The catalysed reaction is (E)-isoeugenol + S-adenosyl-L-methionine = (E)-isomethyleugenol + S-adenosyl-L-homocysteine + H(+). The protein operates within aromatic compound metabolism; phenylpropanoid biosynthesis. Its function is as follows. Phenylpropene O-methyltransferase that catalyzes the methylation of the para-4-hydroxyl of eugenol to methyleugenol. Can also convert chavicol to methylchavicol but with less affinity. In Ocimum basilicum (Sweet basil), this protein is Eugenol O-methyltransferase (EOMT1).